A 2242-amino-acid polypeptide reads, in one-letter code: Large tegument protein deneddylase (2242 aa).

A deubiquitination activity region spans residues 1–238; sequence MKVTQASCHQ…IDLTGVVRES (238 aa). The region spanning 4-226 is the Peptidase C76 domain; sequence TQASCHQGDI…AARLVSTYRD (223 aa). Residues Cys-24, Asp-160, and His-162 contribute to the active site. The interval 239-318 is disordered; it reads ADTAATTTTA…KTLATASSSS (80 aa). Low complexity predominate over residues 240–250; it reads DTAATTTTAAP. The segment covering 251 to 268 has biased composition (pro residues); that stretch reads SLPPLPDPIVDPGCPPGV. A compositionally biased stretch (low complexity) spans 304–318; sequence PSTTSKTLATASSSS. Residues 328 to 332 are interaction with inner tegument protein; sequence SSAVP. Positions 1173 to 1190 are enriched in polar residues; the sequence is SQQKMEGQLQETRQQMTE. The tract at residues 1173-1229 is disordered; sequence SQQKMEGQLQETRQQMTETSERLDRSLRQDPGSSSVTRVPEKPFKGQELAGRITPPP. Residues 1191 to 1200 show a composition bias toward basic and acidic residues; the sequence is TSERLDRSLR.

This sequence belongs to the herpesviridae large tegument protein family. In terms of assembly, interacts with host CUL1 and CUL4A; these interactions inhibit the E3 ligase activity of cullins. Interacts with inner tegument protein. Interacts with capsid vertex specific component CVC2. Interacts with the major capsid protein/MCP.

Its subcellular location is the virion tegument. The protein resides in the host cytoplasm. The protein localises to the host nucleus. The enzyme catalyses Thiol-dependent hydrolysis of ester, thioester, amide, peptide and isopeptide bonds formed by the C-terminal Gly of ubiquitin (a 76-residue protein attached to proteins as an intracellular targeting signal).. In terms of biological role, large tegument protein that plays multiple roles in the viral cycle. During viral entry, remains associated with the capsid while most of the tegument is detached and participates in the capsid transport toward the host nucleus. Plays a role in the routing of the capsid at the nuclear pore complex and subsequent uncoating. Within the host nucleus, acts as a deneddylase and promotes the degradation of nuclear CRLs (cullin-RING ubiquitin ligases) and thereby stabilizes nuclear CRL substrates, while cytoplasmic CRLs remain unaffected. These modifications prevent host cell cycle S-phase progression and create a favorable environment allowing efficient viral genome replication. Participates later in the secondary envelopment of capsids. Indeed, plays a linker role for the association of the outer viral tegument to the capsids together with the inner tegument protein. The polypeptide is Large tegument protein deneddylase (Homo sapiens (Human)).